A 363-amino-acid chain; its full sequence is RNA exonuclease NGL1 (363 aa).

A mitochondrion-targeting transit peptide spans 1-23; it reads MFTRRFIPVVQSTKQNIGKYVRK.

This sequence belongs to the CCR4/nocturin family.

It localises to the mitochondrion. The protein is RNA exonuclease NGL1 (NGL1) of Saccharomyces cerevisiae (strain ATCC 204508 / S288c) (Baker's yeast).